A 638-amino-acid chain; its full sequence is 1-deoxy-D-xylulose-5-phosphate synthase (638 aa).

Thiamine diphosphate contacts are provided by residues His72 and Gly113 to Ala115. Asp144 lines the Mg(2+) pocket. Thiamine diphosphate-binding positions include Gly145–Ala146, Asn174, Tyr287, and Glu370. Asn174 contacts Mg(2+).

This sequence belongs to the transketolase family. DXPS subfamily. As to quaternary structure, homodimer. The cofactor is Mg(2+). Requires thiamine diphosphate as cofactor.

It carries out the reaction D-glyceraldehyde 3-phosphate + pyruvate + H(+) = 1-deoxy-D-xylulose 5-phosphate + CO2. It participates in metabolic intermediate biosynthesis; 1-deoxy-D-xylulose 5-phosphate biosynthesis; 1-deoxy-D-xylulose 5-phosphate from D-glyceraldehyde 3-phosphate and pyruvate: step 1/1. Its function is as follows. Catalyzes the acyloin condensation reaction between C atoms 2 and 3 of pyruvate and glyceraldehyde 3-phosphate to yield 1-deoxy-D-xylulose-5-phosphate (DXP). The sequence is that of 1-deoxy-D-xylulose-5-phosphate synthase from Thermosynechococcus vestitus (strain NIES-2133 / IAM M-273 / BP-1).